The chain runs to 113 residues: Hydrogenase maturation factor HypA (113 aa).

His-2 is a binding site for Ni(2+). Zn(2+) is bound by residues Cys-73, Cys-76, Cys-89, and Cys-92.

This sequence belongs to the HypA/HybF family.

In terms of biological role, involved in the maturation of [NiFe] hydrogenases. Required for nickel insertion into the metal center of the hydrogenase. In Rhodobacter capsulatus (Rhodopseudomonas capsulata), this protein is Hydrogenase maturation factor HypA.